A 197-amino-acid polypeptide reads, in one-letter code: Inner membrane protein p54 (197 aa).

A helical membrane pass occupies residues 32-52 (YTILIAIVVLVIIIIVLIYLF). A disordered region spans residues 84–123 (PQPGTSKPAGATTASVGKPVTGRPATNRPVTDRPATNNPV). 4 repeat units span residues 139–142 (AAAS), 143–146 (AAAS), 147–150 (AAAS), and 151–154 (AAAS). The 4 X 4 AA tandem repeats of A-A-A-S stretch occupies residues 139 to 154 (AAASAAASAAASAAAS). The tract at residues 163 to 175 (YTTVTTQNTASQT) is interaction with host DYNLL1.

Belongs to the asfivirus envelope protein p54 family. In terms of assembly, interacts with the host light chain cytoplasmic dynein DYNLL1; this interaction is critical for intracellular microtubule-dependent virus transport toward viral factories.

The protein resides in the virion membrane. Its subcellular location is the host cytoplasm. The protein localises to the host cytoskeleton. It localises to the host endoplasmic reticulum membrane. In terms of biological role, inner envelope protein involved, through its interaction with host dynein, in the intracellular microtubule-dependent transport of viral capsid toward viral factories. Seems to induce caspase-3 activation and apoptosis. Plays a role in virion morphogenesis by recruiting and transforming the host ER membranes into the precursors of the viral envelope. Involved in virus attachment to the host cell. The sequence is that of Inner membrane protein p54 from African swine fever virus (isolate Tick/South Africa/Pretoriuskop Pr4/1996) (ASFV).